Reading from the N-terminus, the 1372-residue chain is DNA-directed RNA polymerase subunit beta (1372 aa).

It belongs to the RNA polymerase beta chain family. As to quaternary structure, the RNAP catalytic core consists of 2 alpha, 1 beta, 1 beta' and 1 omega subunit. When a sigma factor is associated with the core the holoenzyme is formed, which can initiate transcription.

It carries out the reaction RNA(n) + a ribonucleoside 5'-triphosphate = RNA(n+1) + diphosphate. DNA-dependent RNA polymerase catalyzes the transcription of DNA into RNA using the four ribonucleoside triphosphates as substrates. The sequence is that of DNA-directed RNA polymerase subunit beta from Nitratidesulfovibrio vulgaris (strain DP4) (Desulfovibrio vulgaris).